A 149-amino-acid polypeptide reads, in one-letter code: Urease accessory protein UreE (149 aa).

Belongs to the UreE family.

It localises to the cytoplasm. In terms of biological role, involved in urease metallocenter assembly. Binds nickel. Probably functions as a nickel donor during metallocenter assembly. The protein is Urease accessory protein UreE of Corynebacterium efficiens (strain DSM 44549 / YS-314 / AJ 12310 / JCM 11189 / NBRC 100395).